Reading from the N-terminus, the 332-residue chain is Ferredoxin--NADP reductase (332 aa).

FAD contacts are provided by aspartate 33, glutamine 41, tyrosine 46, alanine 86, phenylalanine 120, aspartate 286, and threonine 327.

Belongs to the ferredoxin--NADP reductase type 2 family. Homodimer. FAD serves as cofactor.

It carries out the reaction 2 reduced [2Fe-2S]-[ferredoxin] + NADP(+) + H(+) = 2 oxidized [2Fe-2S]-[ferredoxin] + NADPH. The sequence is that of Ferredoxin--NADP reductase from Rickettsia bellii (strain OSU 85-389).